Consider the following 208-residue polypeptide: Protein-L-isoaspartate O-methyltransferase (208 aa).

Residue Ser59 is part of the active site.

This sequence belongs to the methyltransferase superfamily. L-isoaspartyl/D-aspartyl protein methyltransferase family.

The protein localises to the cytoplasm. The catalysed reaction is [protein]-L-isoaspartate + S-adenosyl-L-methionine = [protein]-L-isoaspartate alpha-methyl ester + S-adenosyl-L-homocysteine. Functionally, catalyzes the methyl esterification of L-isoaspartyl residues in peptides and proteins that result from spontaneous decomposition of normal L-aspartyl and L-asparaginyl residues. It plays a role in the repair and/or degradation of damaged proteins. The chain is Protein-L-isoaspartate O-methyltransferase from Escherichia coli (strain K12 / MC4100 / BW2952).